Here is a 222-residue protein sequence, read N- to C-terminus: GEM-like protein 4 (222 aa).

Residues 95–173 (KIFKRLFRVS…CKIDRVNQSQ (79 aa)) enclose the GRAM domain.

The protein belongs to the GEM family.

The protein is GEM-like protein 4 of Arabidopsis thaliana (Mouse-ear cress).